Here is a 282-residue protein sequence, read N- to C-terminus: DegV domain-containing protein SPy_0865/M5005_Spy0672 (282 aa).

The DegV domain maps to 3 to 280 (LAVITDSTAT…EGAIAFGVTP (278 aa)). Threonine 61 and serine 94 together coordinate hexadecanoate.

Functionally, may bind long-chain fatty acids, such as palmitate, and may play a role in lipid transport or fatty acid metabolism. This chain is DegV domain-containing protein SPy_0865/M5005_Spy0672, found in Streptococcus pyogenes serotype M1.